The primary structure comprises 331 residues: Glyceraldehyde-3-phosphate dehydrogenase (331 aa).

NAD(+) contacts are provided by residues 12-13, Asp34, Arg78, and Thr120; that span reads RI. Residues 149 to 151, Thr180, 209 to 210, and Arg232 each bind D-glyceraldehyde 3-phosphate; these read SCT and TG. Catalysis depends on Cys150, which acts as the Nucleophile. Asn314 is a binding site for NAD(+).

This sequence belongs to the glyceraldehyde-3-phosphate dehydrogenase family. As to quaternary structure, homotetramer.

It localises to the cytoplasm. The catalysed reaction is D-glyceraldehyde 3-phosphate + phosphate + NAD(+) = (2R)-3-phospho-glyceroyl phosphate + NADH + H(+). Its pathway is carbohydrate degradation; glycolysis; pyruvate from D-glyceraldehyde 3-phosphate: step 1/5. Functionally, catalyzes the oxidative phosphorylation of glyceraldehyde 3-phosphate (G3P) to 1,3-bisphosphoglycerate (BPG) using the cofactor NAD. The first reaction step involves the formation of a hemiacetal intermediate between G3P and a cysteine residue, and this hemiacetal intermediate is then oxidized to a thioester, with concomitant reduction of NAD to NADH. The reduced NADH is then exchanged with the second NAD, and the thioester is attacked by a nucleophilic inorganic phosphate to produce BPG. The sequence is that of Glyceraldehyde-3-phosphate dehydrogenase (gapA) from Salmonella typhi.